We begin with the raw amino-acid sequence, 376 residues long: Probable allantoicase (376 aa).

It belongs to the allantoicase family.

The catalysed reaction is allantoate + H2O = (S)-ureidoglycolate + urea. It participates in nitrogen metabolism; (S)-allantoin degradation; (S)-ureidoglycolate from allantoate (aminidohydrolase route): step 1/1. This Streptomyces avermitilis (strain ATCC 31267 / DSM 46492 / JCM 5070 / NBRC 14893 / NCIMB 12804 / NRRL 8165 / MA-4680) protein is Probable allantoicase.